A 300-amino-acid chain; its full sequence is Acetylglutamate kinase (300 aa).

Substrate-binding positions include 73–74 (GG), arginine 95, and asparagine 197.

It belongs to the acetylglutamate kinase family. ArgB subfamily.

Its subcellular location is the cytoplasm. The catalysed reaction is N-acetyl-L-glutamate + ATP = N-acetyl-L-glutamyl 5-phosphate + ADP. It participates in amino-acid biosynthesis; L-arginine biosynthesis; N(2)-acetyl-L-ornithine from L-glutamate: step 2/4. Functionally, catalyzes the ATP-dependent phosphorylation of N-acetyl-L-glutamate. The sequence is that of Acetylglutamate kinase from Bordetella petrii (strain ATCC BAA-461 / DSM 12804 / CCUG 43448).